Consider the following 1246-residue polypeptide: Putative helicase L115 (1246 aa).

The segment at 1–21 (MSKTITKKVNKKTKKSTKINP) is disordered. The Helicase ATP-binding domain maps to 872–1030 (AKFTDGYHGF…YYMLKMLQTG (159 aa)). An ATP-binding site is contributed by 885 to 892 (SDVGSGKT).

The protein is Putative helicase L115 of Acanthamoeba polyphaga (Amoeba).